The following is a 585-amino-acid chain: Glutathione S-transferase C-terminal domain-containing protein homolog (585 aa).

A GST C-terminal domain is found at 120–275 (LGFKGSCLLA…DKCARVLRDL (156 aa)).

The protein belongs to the GSTCD family.

The polypeptide is Glutathione S-transferase C-terminal domain-containing protein homolog (Drosophila melanogaster (Fruit fly)).